Consider the following 275-residue polypeptide: Release factor glutamine methyltransferase (275 aa).

S-adenosyl-L-methionine contacts are provided by residues 117-121 (GTGSG), D140, W168, and N182. 182 to 185 (NPPY) provides a ligand contact to substrate.

The protein belongs to the protein N5-glutamine methyltransferase family. PrmC subfamily.

The enzyme catalyses L-glutaminyl-[peptide chain release factor] + S-adenosyl-L-methionine = N(5)-methyl-L-glutaminyl-[peptide chain release factor] + S-adenosyl-L-homocysteine + H(+). Functionally, methylates the class 1 translation termination release factors RF1/PrfA and RF2/PrfB on the glutamine residue of the universally conserved GGQ motif. The sequence is that of Release factor glutamine methyltransferase from Buchnera aphidicola subsp. Schizaphis graminum (strain Sg).